Here is a 452-residue protein sequence, read N- to C-terminus: Bifunctional protein GlmU (452 aa).

Residues 1 to 230 (MSRSRSAIIL…ADEVLGVNSR (230 aa)) form a pyrophosphorylase region. UDP-N-acetyl-alpha-D-glucosamine contacts are provided by residues 10–13 (LAAG), Lys24, Gln75, and 80–81 (GT). Asp105 contributes to the Mg(2+) binding site. UDP-N-acetyl-alpha-D-glucosamine is bound by residues Gly141, Glu156, Asn171, and Asn228. Residue Asn228 participates in Mg(2+) binding. The tract at residues 231–251 (ADLAEAEAAFQSRMRQSMMAD) is linker. The segment at 252–452 (GVTLIAPETV…ARKARKDSQT (201 aa)) is N-acetyltransferase. Positions 317 and 335 each coordinate UDP-N-acetyl-alpha-D-glucosamine. Residue His347 is the Proton acceptor of the active site. 2 residues coordinate UDP-N-acetyl-alpha-D-glucosamine: Tyr350 and Asn361. Acetyl-CoA is bound by residues Ala364, 370–371 (NY), Ser389, Thr407, and Arg424.

In the N-terminal section; belongs to the N-acetylglucosamine-1-phosphate uridyltransferase family. The protein in the C-terminal section; belongs to the transferase hexapeptide repeat family. As to quaternary structure, homotrimer. The cofactor is Mg(2+).

Its subcellular location is the cytoplasm. The enzyme catalyses alpha-D-glucosamine 1-phosphate + acetyl-CoA = N-acetyl-alpha-D-glucosamine 1-phosphate + CoA + H(+). It catalyses the reaction N-acetyl-alpha-D-glucosamine 1-phosphate + UTP + H(+) = UDP-N-acetyl-alpha-D-glucosamine + diphosphate. It functions in the pathway nucleotide-sugar biosynthesis; UDP-N-acetyl-alpha-D-glucosamine biosynthesis; N-acetyl-alpha-D-glucosamine 1-phosphate from alpha-D-glucosamine 6-phosphate (route II): step 2/2. It participates in nucleotide-sugar biosynthesis; UDP-N-acetyl-alpha-D-glucosamine biosynthesis; UDP-N-acetyl-alpha-D-glucosamine from N-acetyl-alpha-D-glucosamine 1-phosphate: step 1/1. Its pathway is bacterial outer membrane biogenesis; LPS lipid A biosynthesis. In terms of biological role, catalyzes the last two sequential reactions in the de novo biosynthetic pathway for UDP-N-acetylglucosamine (UDP-GlcNAc). The C-terminal domain catalyzes the transfer of acetyl group from acetyl coenzyme A to glucosamine-1-phosphate (GlcN-1-P) to produce N-acetylglucosamine-1-phosphate (GlcNAc-1-P), which is converted into UDP-GlcNAc by the transfer of uridine 5-monophosphate (from uridine 5-triphosphate), a reaction catalyzed by the N-terminal domain. This is Bifunctional protein GlmU from Maricaulis maris (strain MCS10) (Caulobacter maris).